The primary structure comprises 494 residues: 4-trimethylaminobutyraldehyde dehydrogenase (494 aa).

Ser-2 bears the N-acetylserine mark. Lys-30 is subject to N6-acetyllysine; alternate. N6-succinyllysine; alternate is present on Lys-30. Lys-59 bears the N6-succinyllysine mark. Residues Lys-180 and 232–236 (GSVPT) each bind NAD(+). The Proton acceptor role is filled by Glu-254. Catalysis depends on Cys-288, which acts as the Nucleophile. Lys-298 and Lys-344 each carry N6-acetyllysine. An NAD(+)-binding site is contributed by Glu-391.

The protein belongs to the aldehyde dehydrogenase family. Homotetramer.

Its subcellular location is the cytoplasm. The protein resides in the cytosol. The enzyme catalyses 4-(trimethylamino)butanal + NAD(+) + H2O = 4-(trimethylamino)butanoate + NADH + 2 H(+). It carries out the reaction an aldehyde + NAD(+) + H2O = a carboxylate + NADH + 2 H(+). The catalysed reaction is 4-aminobutanal + NAD(+) + H2O = 4-aminobutanoate + NADH + 2 H(+). It catalyses the reaction formaldehyde + NAD(+) + H2O = formate + NADH + 2 H(+). The enzyme catalyses acetaldehyde + NAD(+) + H2O = acetate + NADH + 2 H(+). It carries out the reaction imidazole-4-acetaldehyde + NAD(+) + H2O = imidazole-4-acetate + NADH + 2 H(+). The catalysed reaction is acrolein + NAD(+) + H2O = acrylate + NADH + 2 H(+). It catalyses the reaction (5-hydroxyindol-3-yl)acetaldehyde + NAD(+) + H2O = (5-hydroxyindol-3-yl)acetate + NADH + 2 H(+). The enzyme catalyses 3,4-dihydroxyphenylacetaldehyde + NAD(+) + H2O = 3,4-dihydroxyphenylacetate + NADH + 2 H(+). It carries out the reaction spermine monoaldehyde + NAD(+) + H2O = N-(2-carboxyethyl)spermidine + NADH + 2 H(+). The catalysed reaction is propanal + NAD(+) + H2O = propanoate + NADH + 2 H(+). It catalyses the reaction butanal + NAD(+) + H2O = butanoate + NADH + 2 H(+). The enzyme catalyses pentanal + NAD(+) + H2O = pentanoate + NADH + 2 H(+). It carries out the reaction hexanal + NAD(+) + H2O = hexanoate + NADH + 2 H(+). Its pathway is amine and polyamine biosynthesis; carnitine biosynthesis. Converts gamma-trimethylaminobutyraldehyde into gamma-butyrobetaine with high efficiency (in vitro). Can catalyze the irreversible oxidation of a broad range of aldehydes to the corresponding acids in an NAD-dependent reaction, but with low efficiency. Catalyzes the oxidation of aldehydes arising from biogenic amines and polyamines. The chain is 4-trimethylaminobutyraldehyde dehydrogenase (ALDH9A1) from Bos taurus (Bovine).